The following is a 103-amino-acid chain: Co-chaperonin GroES (103 aa).

The protein belongs to the GroES chaperonin family. In terms of assembly, heptamer of 7 subunits arranged in a ring. Interacts with the chaperonin GroEL.

The protein resides in the cytoplasm. Its function is as follows. Together with the chaperonin GroEL, plays an essential role in assisting protein folding. The GroEL-GroES system forms a nano-cage that allows encapsulation of the non-native substrate proteins and provides a physical environment optimized to promote and accelerate protein folding. GroES binds to the apical surface of the GroEL ring, thereby capping the opening of the GroEL channel. The chain is Co-chaperonin GroES from Picosynechococcus sp. (strain ATCC 27264 / PCC 7002 / PR-6) (Agmenellum quadruplicatum).